A 384-amino-acid polypeptide reads, in one-letter code: 8-amino-7-oxononanoate synthase (384 aa).

R21 contributes to the substrate binding site. 108 to 109 contributes to the pyridoxal 5'-phosphate binding site; sequence GF. Residue H133 coordinates substrate. 3 residues coordinate pyridoxal 5'-phosphate: S179, H207, and T233. Residue K236 is modified to N6-(pyridoxal phosphate)lysine. Substrate is bound at residue T352.

This sequence belongs to the class-II pyridoxal-phosphate-dependent aminotransferase family. BioF subfamily. Homodimer. It depends on pyridoxal 5'-phosphate as a cofactor.

The enzyme catalyses 6-carboxyhexanoyl-[ACP] + L-alanine + H(+) = (8S)-8-amino-7-oxononanoate + holo-[ACP] + CO2. It participates in cofactor biosynthesis; biotin biosynthesis. In terms of biological role, catalyzes the decarboxylative condensation of pimeloyl-[acyl-carrier protein] and L-alanine to produce 8-amino-7-oxononanoate (AON), [acyl-carrier protein], and carbon dioxide. The sequence is that of 8-amino-7-oxononanoate synthase from Citrobacter koseri (strain ATCC BAA-895 / CDC 4225-83 / SGSC4696).